A 170-amino-acid chain; its full sequence is Ribosome maturation factor RimM (170 aa).

The 73-residue stretch at 93-165 folds into the PRC barrel domain; that stretch reads PDEFHDHELI…RVVIDPPPGL (73 aa).

This sequence belongs to the RimM family. As to quaternary structure, binds ribosomal protein uS19.

The protein localises to the cytoplasm. Functionally, an accessory protein needed during the final step in the assembly of 30S ribosomal subunit, possibly for assembly of the head region. Essential for efficient processing of 16S rRNA. May be needed both before and after RbfA during the maturation of 16S rRNA. It has affinity for free ribosomal 30S subunits but not for 70S ribosomes. The protein is Ribosome maturation factor RimM of Thermobifida fusca (strain YX).